The chain runs to 550 residues: Hydroxylamine reductase (550 aa).

C7, C10, C19, and C25 together coordinate [4Fe-4S] cluster. Hybrid [4Fe-2O-2S] cluster contacts are provided by H244, E268, C312, C405, C433, C458, E493, and K495. Position 405 is a cysteine persulfide (C405).

Belongs to the HCP family. [4Fe-4S] cluster serves as cofactor. Requires hybrid [4Fe-2O-2S] cluster as cofactor.

Its subcellular location is the cytoplasm. It carries out the reaction A + NH4(+) + H2O = hydroxylamine + AH2 + H(+). Catalyzes the reduction of hydroxylamine to form NH(3) and H(2)O. The chain is Hydroxylamine reductase from Porphyromonas gingivalis (strain ATCC BAA-308 / W83).